The chain runs to 792 residues: Phenylalanine--tRNA ligase beta subunit (792 aa).

Residues 39–147 enclose the tRNA-binding domain; sequence GESLGQVVVA…DDAPVGQALA (109 aa). One can recognise a B5 domain in the interval 400–475; it reads PQPARILLRR…RIHGYDRVPT (76 aa). Residues Asp-453, Asp-459, Glu-462, and Asp-463 each contribute to the Mg(2+) site. The FDX-ACB domain occupies 698–791; that stretch reads SRFPSVRRDL…IEREHRARIR (94 aa).

This sequence belongs to the phenylalanyl-tRNA synthetase beta subunit family. Type 1 subfamily. As to quaternary structure, tetramer of two alpha and two beta subunits. Requires Mg(2+) as cofactor.

The protein resides in the cytoplasm. It carries out the reaction tRNA(Phe) + L-phenylalanine + ATP = L-phenylalanyl-tRNA(Phe) + AMP + diphosphate + H(+). The polypeptide is Phenylalanine--tRNA ligase beta subunit (Xanthomonas oryzae pv. oryzae (strain MAFF 311018)).